The following is a 167-amino-acid chain: MKGNNFNLLGNITWLWMNSSLHKEWSCKLLACNVIPAIENEQYMLLVDNGIPIAYCSWADLNLETEVKYIKDISSLTSDEWQSGDRRWIIDWVAPFGHSQLLYKKMCQKYPDMIVRAIRFYPKQKELGKITYFKGGKLDKKTAKERFDIYQEELATALKNEFNFIEK.

Catalysis depends on residues His22 and Asp91.

The protein belongs to the RTX toxin acyltransferase family.

It is found in the cytoplasm. The enzyme catalyses a fatty acyl-[ACP] + L-lysyl-[protein] = N(6)-(fatty acyl)-L-lysyl-[protein] + holo-[ACP] + H(+). Involved in fatty acylation of the protoxin (LktA) at two internal lysine residues, thereby converting it to the active toxin. The polypeptide is Leukotoxin-activating lysine-acyltransferase LktC serotype T3 (lktC) (Mannheimia haemolytica (Pasteurella haemolytica)).